Reading from the N-terminus, the 453-residue chain is tRNA modification GTPase MnmE (453 aa).

The (6S)-5-formyl-5,6,7,8-tetrahydrofolate site is built by Arg-22, Glu-79, and Lys-119. Positions 215–376 (GMKVVIAGRP…LKLHLKSLMG (162 aa)) constitute a TrmE-type G domain. Residue Asn-225 participates in K(+) binding. Residues 225–230 (NAGKSS), 244–250 (TEIAGTT), 269–272 (DTAG), and 334–337 (NKAD) contribute to the GTP site. Ser-229 serves as a coordination point for Mg(2+). K(+)-binding residues include Thr-244, Ile-246, and Thr-249. A Mg(2+)-binding site is contributed by Thr-250. A (6S)-5-formyl-5,6,7,8-tetrahydrofolate-binding site is contributed by Lys-453.

Belongs to the TRAFAC class TrmE-Era-EngA-EngB-Septin-like GTPase superfamily. TrmE GTPase family. As to quaternary structure, homodimer. Heterotetramer of two MnmE and two MnmG subunits. The cofactor is K(+).

Its subcellular location is the cytoplasm. Its function is as follows. Exhibits a very high intrinsic GTPase hydrolysis rate. Involved in the addition of a carboxymethylaminomethyl (cmnm) group at the wobble position (U34) of certain tRNAs, forming tRNA-cmnm(5)s(2)U34. This Shewanella sp. (strain W3-18-1) protein is tRNA modification GTPase MnmE.